The chain runs to 232 residues: uncharacterized protein (232 aa).

The signal sequence occupies residues 1–18; the sequence is MGILKSLFTLGKSFISQA. The tract at residues 207–232 is disordered; it reads AEAGIGGSNKSSAQDVLARLQRQQGE.

It belongs to the PspA/Vipp/IM30 family.

This is an uncharacterized protein from Escherichia coli O6:H1 (strain CFT073 / ATCC 700928 / UPEC).